A 123-amino-acid polypeptide reads, in one-letter code: Defensin beta 118 (123 aa).

The first 19 residues, 1–19 (MKLLLLALPVLVLLPQVIP), serve as a signal peptide directing secretion. 3 disulfide bridges follow: cysteine 27–cysteine 54, cysteine 34–cysteine 48, and cysteine 38–cysteine 55. Residues 65 to 123 (VPMTSPTPLSDSTPGIIDDILTVRFTTDYFEVSSKKDMVEESEAGRGTETSLPNVHHSS) constitute a propeptide that is removed on maturation. A compositionally biased stretch (basic and acidic residues) spans 100–110 (KDMVEESEAGR). The tract at residues 100-123 (KDMVEESEAGRGTETSLPNVHHSS) is disordered. Polar residues predominate over residues 112–123 (TETSLPNVHHSS).

This sequence belongs to the beta-defensin family. In terms of processing, the three-dimensional structure formed by the three intramolecular disulfide bridges is indispensable for antimicrobial activity.

The protein resides in the secreted. Its function is as follows. Host defense peptide that exhibits antimicrobial activity against both Gram-negative bacteria, such as E.coli and S.typhimurium, and Gram-positive bacteria, such as S.aureus and B.subtilis. Inhibits cell adhesion of E.coli on intestinal epithelial enterocytes. Causes rapid permeabilization of both the outer and inner membrane of E.coli, leading to morphological alterations on the bacterial surface. Binds to bacterial lipopolysaccharides (LPS) with high affinity, and may thereby be involved in immunoregulation through LPS neutralization. May contribute to epididymal innate immunity and protect the sperm against attack by microorganisms. The protein is Defensin beta 118 (DEFB118) of Pan troglodytes (Chimpanzee).